A 223-amino-acid polypeptide reads, in one-letter code: Large ribosomal subunit protein bL21 (223 aa).

It belongs to the bacterial ribosomal protein bL21 family. In terms of assembly, part of the 50S ribosomal subunit. Contacts protein L20.

Functionally, this protein binds to 23S rRNA in the presence of protein L20. The chain is Large ribosomal subunit protein bL21 from Mesorhizobium japonicum (strain LMG 29417 / CECT 9101 / MAFF 303099) (Mesorhizobium loti (strain MAFF 303099)).